The primary structure comprises 160 residues: Ureidoglycolate lyase (160 aa).

This sequence belongs to the ureidoglycolate lyase family. As to quaternary structure, homodimer. The cofactor is Ni(2+).

It catalyses the reaction (S)-ureidoglycolate = urea + glyoxylate. It participates in nitrogen metabolism; (S)-allantoin degradation. Functionally, catalyzes the catabolism of the allantoin degradation intermediate (S)-ureidoglycolate, generating urea and glyoxylate. Involved in the anaerobic utilization of allantoin as sole nitrogen source. Reinforces the induction of genes involved in the degradation of allantoin and glyoxylate by producing glyoxylate. This Escherichia coli (strain SMS-3-5 / SECEC) protein is Ureidoglycolate lyase.